A 136-amino-acid polypeptide reads, in one-letter code: Non-structural protein 1 (136 aa).

This sequence belongs to the pneumovirus non-structural protein 1 family. In terms of assembly, monomer. Homomultimer. Heteromultimer with NS2. Interacts with the matrix protein M. Interacts with host ELOC and CUL2; this interaction allows NS1 to form an active E3 ligase with ELOC and CUL2. Interacts with host IRF3; this interaction leads to the disrupted association of IRF3 with CREBBP and thus reduced binding of IRF3 to the IFN-beta promoter. Interacts with host MAVS; this interaction prevents MAVS binding to RIGI and inhibits signaling pathway leading to interferon production. Interacts with host TRIM25 (via SPRY domain); this interaction suppresses RIGI ubiquitination and results in decreased interaction between RIGI and MAVS.

It is found in the host cytoplasm. Its subcellular location is the host mitochondrion. The protein localises to the host nucleus. Plays a major role in antagonizing the type I IFN-mediated antiviral response by degrading or inhibiting multiple cellular factors required for either IFN induction or response pathways. Acts cooperatively with NS2 to repress activation and nuclear translocation of host IFN-regulatory factor IRF3. Also disrupts the association of IRF3 with CREBBP. Interacts with host mitochondrial-associated membrane (MAM) MAVS and prevents the interaction with RIGI. Interacts with TRIM25 to suppress TRIM25-mediated RIGI ubiquitination and thereby RIGI-MAVS interaction. Together with NS2, participates in the proteasomal degradation of host STAT2, IRF3, IRF7, TBK1 and RIGI through a NS-degradasome involving CUL2 and Elongin-C. The degradasome requires an intact mitochondrial MAVS. Decreases the levels of host TRAF3 and IKBKE/IKK-epsilon. As functions other than disruptions of the type I IFN-mediated antiviral signaling pathways, induces host SOCS1 and SOCS3 expression. Suppresses premature apoptosis by an NF-kappa-B-dependent, interferon-independent mechanism and thus facilitates virus growth. Additionally, NS1 may serve some inhibitory role in viral transcription and RNA replication. Suppresses proliferation and activation of host CD103+ CD8+ cytotoxic T-lymphocytes and Th17 helper T-lymphocytes. This Ovis aries (Sheep) protein is Non-structural protein 1 (1C).